A 371-amino-acid polypeptide reads, in one-letter code: Chaperone protein DnaJ (371 aa).

Residues 4-68 form the J domain; sequence DYYQILGVSK…QKRAAYDRFG (65 aa). A CR-type zinc finger spans residues 134 to 212; that stretch reads GIEKNISFSS…CHGMGRYHKQ (79 aa). 8 residues coordinate Zn(2+): C147, C150, C164, C167, C186, C189, C200, and C203. CXXCXGXG motif repeat units follow at residues 147-154, 164-171, 186-193, and 200-207; these read CDTCHGTG, CDACGGVG, CHKCQGNG, and CKKCHGMG.

The protein belongs to the DnaJ family. Homodimer. The cofactor is Zn(2+).

The protein localises to the cytoplasm. Its function is as follows. Participates actively in the response to hyperosmotic and heat shock by preventing the aggregation of stress-denatured proteins and by disaggregating proteins, also in an autonomous, DnaK-independent fashion. Unfolded proteins bind initially to DnaJ; upon interaction with the DnaJ-bound protein, DnaK hydrolyzes its bound ATP, resulting in the formation of a stable complex. GrpE releases ADP from DnaK; ATP binding to DnaK triggers the release of the substrate protein, thus completing the reaction cycle. Several rounds of ATP-dependent interactions between DnaJ, DnaK and GrpE are required for fully efficient folding. Also involved, together with DnaK and GrpE, in the DNA replication of plasmids through activation of initiation proteins. This chain is Chaperone protein DnaJ, found in Rickettsia felis (strain ATCC VR-1525 / URRWXCal2) (Rickettsia azadi).